We begin with the raw amino-acid sequence, 337 residues long: DNA-directed RNA polymerase subunit alpha (337 aa).

The alpha N-terminal domain (alpha-NTD) stretch occupies residues 1-233 (MIQKNWQELI…DQLALFINFK (233 aa)). Residues 249 to 337 (FNPALLKKVD…DLAKRYEDQY (89 aa)) are alpha C-terminal domain (alpha-CTD).

It belongs to the RNA polymerase alpha chain family. Homodimer. The RNAP catalytic core consists of 2 alpha, 1 beta, 1 beta' and 1 omega subunit. When a sigma factor is associated with the core the holoenzyme is formed, which can initiate transcription.

It carries out the reaction RNA(n) + a ribonucleoside 5'-triphosphate = RNA(n+1) + diphosphate. Its function is as follows. DNA-dependent RNA polymerase catalyzes the transcription of DNA into RNA using the four ribonucleoside triphosphates as substrates. The sequence is that of DNA-directed RNA polymerase subunit alpha from Bartonella henselae (strain ATCC 49882 / DSM 28221 / CCUG 30454 / Houston 1) (Rochalimaea henselae).